The sequence spans 216 residues: Ceramide-1-phosphate transfer protein (216 aa).

The an N-acylsphingoid base 1-phosphate site is built by Asp56, Lys60, Arg108, Arg112, and His152.

Belongs to the GLTP family.

It is found in the cytoplasm. The protein localises to the cytosol. It localises to the golgi apparatus. Its subcellular location is the trans-Golgi network membrane. The protein resides in the cell membrane. It is found in the endosome membrane. The protein localises to the nucleus outer membrane. It catalyses the reaction N-(hexadecanoyl)-sphing-4-enine-1-phosphate(in) = N-(hexadecanoyl)-sphing-4-enine-1-phosphate(out). The enzyme catalyses N-(9Z-octadecenoyl)-sphing-4-enine-1-phosphate(in) = N-(9Z-octadecenoyl)-sphing-4-enine-1-phosphate(out). Functionally, mediates the intracellular transfer of ceramide-1-phosphate (C1P) between organelle membranes and the cell membrane. Required for normal structure of the Golgi stacks. Can bind phosphoceramides with a variety of aliphatic chains, but has a preference for lipids with saturated C16:0 or monounsaturated C18:1 aliphatic chains, and is inefficient with phosphoceramides containing lignoceryl (C24:0). Plays a role in the regulation of the cellular levels of ceramide-1-phosphate, and thereby contributes to the regulation of phospholipase PLA2G4A activity and the release of arachidonic acid. Has no activity with galactosylceramide, lactosylceramide, sphingomyelin, phosphatidylcholine, phosphatidic acid and ceramide. C1P transfer is stimulated by phosphatidylserine in C1P source vesicles. Regulates autophagy, inflammasome mediated IL1B and IL18 processing, and pyroptosis, but not apoptosis. The sequence is that of Ceramide-1-phosphate transfer protein (Cptp) from Rattus norvegicus (Rat).